The chain runs to 896 residues: Desmocollin-3 (896 aa).

Residues Met1–Phe26 form the signal peptide. The propeptide occupies Ala27–Arg134. Cadherin domains lie at Arg135–Phe242, Thr243–Phe354, Arg355–Cys471, Ser472–Gln579, and Asp580–Lys690. The Extracellular segment spans residues Arg135–Lys690. A glycan (N-linked (GlcNAc...) asparagine) is linked at Asn165. N-linked (GlcNAc...) asparagine glycans are attached at residues Asn391, Asn546, and Asn629. The helical transmembrane segment at Trp691–Val711 threads the bilayer. The Cytoplasmic portion of the chain corresponds to Cys712 to Arg896.

In terms of assembly, may form homodimers. Interacts with DSG1; there is evidence to suggest that the interaction promotes cell-cell adhesion of keratinocytes. In terms of tissue distribution, expressed in stratified epithelia only, such as the epidermis, tongue, esophagus and rumen (at protein level).

Its subcellular location is the cell membrane. The protein localises to the cell junction. It localises to the desmosome. It is found in the cytoplasm. Functionally, a component of desmosome cell-cell junctions which are required for positive regulation of cellular adhesion. Required for cell-cell adhesion in the epidermis, as a result required for the maintenance of the dermal cohesion and the dermal barrier function. Required for cell-cell adhesion of epithelial cell layers surrounding the telogen hair club, as a result plays an important role in telogen hair shaft anchorage. Essential for successful completion of embryo compaction and embryo development. The chain is Desmocollin-3 (DSC3) from Bos taurus (Bovine).